We begin with the raw amino-acid sequence, 437 residues long: Photosystem II stability/assembly factor HCF136, chloroplastic (437 aa).

It belongs to the Ycf48 family.

The protein localises to the plastid. The protein resides in the chloroplast thylakoid membrane. Functionally, essential for photosystem II (PSII) biogenesis; required for assembly of an early intermediate in PSII assembly that includes D2 (psbD) and cytochrome b559. This Cyanidioschyzon merolae (strain NIES-3377 / 10D) (Unicellular red alga) protein is Photosystem II stability/assembly factor HCF136, chloroplastic.